The sequence spans 206 residues: Shieldin complex subunit 1 (206 aa).

Polar residues-rich tracts occupy residues 1–15 (MATQ…TEES), 33–43 (RPSQQTNSEAF), and 60–69 (DSSNLNTEQN). Disordered regions lie at residues 1–21 (MATQ…LDLP) and 33–69 (RPSQ…TEQN).

In terms of assembly, component of the shieldin complex, consisting of SHLD1, SHLD2, SHLD3 and MAD2L2/REV7. Within the complex, SHLD2 forms a scaffold which interacts with a SHLD3-MAD2L2 subcomplex via its N-terminus, and with SHLD1 via its C-terminus. Interacts with ASTE1.

It is found in the chromosome. In terms of biological role, component of the shieldin complex, which plays an important role in repair of DNA double-stranded breaks (DSBs). During G1 and S phase of the cell cycle, the complex functions downstream of TP53BP1 to promote non-homologous end joining (NHEJ) and suppress DNA end resection. Mediates various NHEJ-dependent processes including immunoglobulin class-switch recombination, and fusion of unprotected telomeres. This is Shieldin complex subunit 1 from Bos taurus (Bovine).